A 472-amino-acid polypeptide reads, in one-letter code: Cysteine--tRNA ligase (472 aa).

Residue cysteine 28 participates in Zn(2+) binding. Residues 30-40 (PTVYNYIHIGN) carry the 'HIGH' region motif. Residues cysteine 212, histidine 237, and glutamate 241 each contribute to the Zn(2+) site. The short motif at 271-275 (KMSKS) is the 'KMSKS' region element. Residue lysine 274 coordinates ATP.

The protein belongs to the class-I aminoacyl-tRNA synthetase family. In terms of assembly, monomer. Zn(2+) serves as cofactor.

The protein localises to the cytoplasm. It carries out the reaction tRNA(Cys) + L-cysteine + ATP = L-cysteinyl-tRNA(Cys) + AMP + diphosphate. The polypeptide is Cysteine--tRNA ligase (Limosilactobacillus fermentum (strain NBRC 3956 / LMG 18251) (Lactobacillus fermentum)).